The following is a 184-amino-acid chain: Shikimate kinase (184 aa).

Position 20–25 (20–25) interacts with ATP; the sequence is GVGKSR. S24 contacts Mg(2+). Substrate-binding residues include D42, R66, and G88. Residue R127 coordinates ATP. R146 lines the substrate pocket. An ATP-binding site is contributed by R162.

It belongs to the shikimate kinase family. Monomer. Mg(2+) serves as cofactor.

It localises to the cytoplasm. The enzyme catalyses shikimate + ATP = 3-phosphoshikimate + ADP + H(+). The protein operates within metabolic intermediate biosynthesis; chorismate biosynthesis; chorismate from D-erythrose 4-phosphate and phosphoenolpyruvate: step 5/7. In terms of biological role, catalyzes the specific phosphorylation of the 3-hydroxyl group of shikimic acid using ATP as a cosubstrate. The polypeptide is Shikimate kinase (Thermus thermophilus (strain ATCC BAA-163 / DSM 7039 / HB27)).